The primary structure comprises 394 residues: 2-oxoglutarate and iron-dependent oxygenase domain-containing protein CP2 (394 aa).

Residues 1–35 form a disordered region; sequence MSSEQREGSQETTTTTVEGNGTIAGQNSHSAAPTT. A compositionally biased stretch (polar residues) spans 17-35; the sequence is VEGNGTIAGQNSHSAAPTT. The Fe2OG dioxygenase domain occupies 248 to 347; the sequence is DSHHGFVVEY…RVNMLLWCRS (100 aa). Residues His268, Asp270, and His328 each contribute to the Fe cation site. Arg338 lines the 2-oxoglutarate pocket.

It depends on Fe(2+) as a cofactor. L-ascorbate is required as a cofactor. Expressed in roots, cotyledons, rosette leaves, cauline leaves, inflorescences and siliques.

The protein resides in the nucleus. Its subcellular location is the nucleoplasm. Functionally, participates in the epigenetic repression of flowering genes in association with ICU11. Functions in the repression of several members of the MADS-box transcription factors family, including SEP3, during vegetative development via histone modification. This Arabidopsis thaliana (Mouse-ear cress) protein is 2-oxoglutarate and iron-dependent oxygenase domain-containing protein CP2.